A 489-amino-acid chain; its full sequence is Transcription factor TGAL11 (489 aa).

Residues 87–99 show a composition bias toward low complexity; the sequence is AATATATARPPAT. A disordered region spans residues 87 to 181; sequence AATATATARP…SDHRMTKTLD (95 aa). Over residues 121 to 139 the composition is skewed to polar residues; it reads SNVTADTTDSESSSKNNGD. Residues 148–159 show a composition bias toward low complexity; the sequence is ASQFDQIPQQQQ. Over residues 171 to 181 the composition is skewed to basic and acidic residues; sequence HSDHRMTKTLD. Residues 181-225 form the bZIP domain; the sequence is DPKIMRRLAQNREAARKSRLRKKAYIQQLESSKLRLAQMEQDLER. The basic motif stretch occupies residues 183-203; that stretch reads KIMRRLAQNREAARKSRLRKK. The interval 209–223 is leucine-zipper; that stretch reads LESSKLRLAQMEQDL. The 216-residue stretch at 245–460 folds into the DOG1 domain; that stretch reads AAMFDAEYGR…RALSSLWASR (216 aa).

Belongs to the bZIP family.

The protein localises to the nucleus. In terms of biological role, transcriptional regulator involved in defense response. The polypeptide is Transcription factor TGAL11 (Oryza sativa subsp. japonica (Rice)).